Here is a 542-residue protein sequence, read N- to C-terminus: Cytochrome P450 27C1 (542 aa).

The transit peptide at 1–80 directs the protein to the mitochondrion; sequence MQTSAMALLA…LAAMPGPRTL (80 aa). Positions 20–75 are disordered; the sequence is APERGGLLGGGAPRRPQPAGARLPAGARAEDKGAGRPGSPPGGGRAEGPRSLAAMP. A compositionally biased stretch (low complexity) spans 32 to 46; that stretch reads PRRPQPAGARLPAGA. Cysteine 488 is a binding site for heme.

Belongs to the cytochrome P450 family. The cofactor is heme. In terms of tissue distribution, widely expressed, with highest levels in the liver, kidney and pancreas. As to expression, expressed in the skin (at protein level).

The protein localises to the mitochondrion membrane. The enzyme catalyses all-trans-retinol + 2 reduced [adrenodoxin] + O2 + 2 H(+) = all-trans-3,4-didehydroretinol + 2 oxidized [adrenodoxin] + 2 H2O. It catalyses the reaction all-trans-retinol + 2 reduced [adrenodoxin] + O2 + 2 H(+) = all-trans-4-hydroxyretinol + 2 oxidized [adrenodoxin] + H2O. It carries out the reaction all-trans-retinol + 2 reduced [adrenodoxin] + O2 + 2 H(+) = all-trans-3-hydroxyretinol + 2 oxidized [adrenodoxin] + H2O. The protein operates within cofactor metabolism; retinol metabolism. In terms of biological role, a cytochrome P450 monooxygenase that catalyzes the 3,4 desaturation of all-trans-retinol (also called vitamin A1) to all-trans-3,4-didehydroretinol (also called vitamin A2) in the skin. Desaturates with lower efficiency all-trans retinal and all-trans retinoic acid. Forms minor amounts of 3-hydroxy and 4-hydroxy all-trans-retinol derivatives. Mechanistically, uses molecular oxygen inserting one oxygen atom into a substrate and reducing the second into a water molecule. Two electrons are provided by NADPH via a two-protein mitochondrial transfer system comprising flavoprotein FDXR (adrenodoxin/ferredoxin reductase) and nonheme iron-sulfur protein FDX1 or FDX2 (adrenodoxin/ferredoxin). This is Cytochrome P450 27C1 from Homo sapiens (Human).